The primary structure comprises 144 residues: Bacilliredoxin BrxA (144 aa).

Active-site nucleophile residues include Cys53 and Cys55. Residue Cys53 is modified to S-bacillithiol cysteine disulfide. Positions 53 to 55 (CGC) match the CXC active site motif motif. Cysteines 53 and 55 form a disulfide.

This sequence belongs to the bacilliredoxin family. N-terminal Cys of the CXC active site motif can react with bacillithiol (BSH) to form mixed disulfides. S-bacillithiolation protects Cys residues against overoxidation by acting as a redox switch in response to oxidative stress.

Its function is as follows. S-bacillithiolation is the formation of mixed disulfide bonds between protein thiols and the general thiol reductant bacillithiol (BSH) under oxidative stress. BSH is an equivalent of glutathione (GSH) in Firmicutes. This protein is a dithiol bacilliredoxin, which debacillithiolates (removes BSH) the S-bacillithiolated OhrR (OhrR-SSB) in vitro and in vivo NaOCl-generated S-bacillithiolated MetE (MetE-SSB). Involved in maintaining redox homeostasis in response to disulfide stress conditions. Has a redox potential of -130 mV. Displays weak protein disulfide isomerase activity in vitro. The chain is Bacilliredoxin BrxA from Bacillus subtilis (strain 168).